A 364-amino-acid chain; its full sequence is Carbamoyl phosphate synthase pyrimidine-specific small chain (364 aa).

Residues 1 to 169 (MKRYLVLEDG…AYPNPATGPN (169 aa)) form a CPSase region. The L-glutamine site is built by serine 45, glycine 217, and glycine 219. Positions 169–356 (NVVVVDFGLK…IDLMAANQAT (188 aa)) constitute a Glutamine amidotransferase type-1 domain. Cysteine 244 acts as the Nucleophile in catalysis. The L-glutamine site is built by leucine 245, glutamine 248, asparagine 286, glycine 288, and tyrosine 289. Residues histidine 329 and aspartate 331 contribute to the active site.

The protein belongs to the CarA family. Composed of two chains; the small (or glutamine) chain promotes the hydrolysis of glutamine to ammonia, which is used by the large (or ammonia) chain to synthesize carbamoyl phosphate. Tetramer of heterodimers (alpha,beta)4.

It catalyses the reaction hydrogencarbonate + L-glutamine + 2 ATP + H2O = carbamoyl phosphate + L-glutamate + 2 ADP + phosphate + 2 H(+). The catalysed reaction is L-glutamine + H2O = L-glutamate + NH4(+). The protein operates within pyrimidine metabolism; UMP biosynthesis via de novo pathway; (S)-dihydroorotate from bicarbonate: step 1/3. Inhibited by pyrimidine. In terms of biological role, small subunit of the glutamine-dependent carbamoyl phosphate synthetase (CPSase). CPSase catalyzes the formation of carbamoyl phosphate from the ammonia moiety of glutamine, carbonate, and phosphate donated by ATP, constituting the first step of the biosynthetic pathway leading to pyrimidine nucleotides. The small subunit (glutamine amidotransferase) binds and cleaves glutamine to supply the large subunit with the substrate ammonia. This Lactiplantibacillus plantarum (strain ATCC BAA-793 / NCIMB 8826 / WCFS1) (Lactobacillus plantarum) protein is Carbamoyl phosphate synthase pyrimidine-specific small chain.